Here is a 201-residue protein sequence, read N- to C-terminus: Recombination protein RecR (201 aa).

The C4-type zinc finger occupies Cys-57–Cys-72. In terms of domain architecture, Toprim spans Gly-81–Pro-176.

The protein belongs to the RecR family.

Its function is as follows. May play a role in DNA repair. It seems to be involved in an RecBC-independent recombinational process of DNA repair. It may act with RecF and RecO. In Pectobacterium atrosepticum (strain SCRI 1043 / ATCC BAA-672) (Erwinia carotovora subsp. atroseptica), this protein is Recombination protein RecR.